The following is a 549-amino-acid chain: Chaperonin GroEL (549 aa).

Residues 29–32, lysine 50, 86–90, glycine 414, 478–480, and aspartate 494 contribute to the ATP site; these read TLGP, DGTTT, and NAA.

The protein belongs to the chaperonin (HSP60) family. As to quaternary structure, forms a cylinder of 14 subunits composed of two heptameric rings stacked back-to-back. Interacts with the co-chaperonin GroES.

The protein resides in the cytoplasm. It carries out the reaction ATP + H2O + a folded polypeptide = ADP + phosphate + an unfolded polypeptide.. Functionally, together with its co-chaperonin GroES, plays an essential role in assisting protein folding. The GroEL-GroES system forms a nano-cage that allows encapsulation of the non-native substrate proteins and provides a physical environment optimized to promote and accelerate protein folding. This Psychrobacter cryohalolentis (strain ATCC BAA-1226 / DSM 17306 / VKM B-2378 / K5) protein is Chaperonin GroEL.